Consider the following 351-residue polypeptide: Holliday junction branch migration complex subunit RuvB (351 aa).

Residues 1-189 (MTAHDADWSD…FGFTAHMDFY (189 aa)) form a large ATPase domain (RuvB-L) region. ATP-binding positions include Leu-28, Arg-29, Gly-70, Lys-73, Thr-74, Ser-75, 136 to 138 (EDF), Arg-179, Tyr-189, and Arg-226. Thr-74 lines the Mg(2+) pocket. The segment at 190 to 260 (EPAELQQVLA…VAKAALAVYD (71 aa)) is small ATPAse domain (RuvB-S). Positions 263–351 (ELGLDRLDRA…AGLGQPGLFD (89 aa)) are head domain (RuvB-H). 2 residues coordinate DNA: Arg-318 and Arg-323.

Belongs to the RuvB family. Homohexamer. Forms an RuvA(8)-RuvB(12)-Holliday junction (HJ) complex. HJ DNA is sandwiched between 2 RuvA tetramers; dsDNA enters through RuvA and exits via RuvB. An RuvB hexamer assembles on each DNA strand where it exits the tetramer. Each RuvB hexamer is contacted by two RuvA subunits (via domain III) on 2 adjacent RuvB subunits; this complex drives branch migration. In the full resolvosome a probable DNA-RuvA(4)-RuvB(12)-RuvC(2) complex forms which resolves the HJ.

The protein resides in the cytoplasm. The catalysed reaction is ATP + H2O = ADP + phosphate + H(+). In terms of biological role, the RuvA-RuvB-RuvC complex processes Holliday junction (HJ) DNA during genetic recombination and DNA repair, while the RuvA-RuvB complex plays an important role in the rescue of blocked DNA replication forks via replication fork reversal (RFR). RuvA specifically binds to HJ cruciform DNA, conferring on it an open structure. The RuvB hexamer acts as an ATP-dependent pump, pulling dsDNA into and through the RuvAB complex. RuvB forms 2 homohexamers on either side of HJ DNA bound by 1 or 2 RuvA tetramers; 4 subunits per hexamer contact DNA at a time. Coordinated motions by a converter formed by DNA-disengaged RuvB subunits stimulates ATP hydrolysis and nucleotide exchange. Immobilization of the converter enables RuvB to convert the ATP-contained energy into a lever motion, pulling 2 nucleotides of DNA out of the RuvA tetramer per ATP hydrolyzed, thus driving DNA branch migration. The RuvB motors rotate together with the DNA substrate, which together with the progressing nucleotide cycle form the mechanistic basis for DNA recombination by continuous HJ branch migration. Branch migration allows RuvC to scan DNA until it finds its consensus sequence, where it cleaves and resolves cruciform DNA. In Mycobacterium avium (strain 104), this protein is Holliday junction branch migration complex subunit RuvB.